We begin with the raw amino-acid sequence, 704 residues long: Ubiquitin-like modifier-activating enzyme atg7 (704 aa).

The GXGXXG motif signature appears at 372 to 377 (GAGTLG). Catalysis depends on Cys555, which acts as the Glycyl thioester intermediate. The tract at residues 660 to 699 (ALTEKDYITELSGLAEVQRKAEAAANDVEWDSDEEGMEDE) is homodimerization. Residues 682-704 (AAANDVEWDSDEEGMEDEEPELL) are disordered. Residues 687–704 (VEWDSDEEGMEDEEPELL) are compositionally biased toward acidic residues.

The protein belongs to the ATG7 family. In terms of assembly, homodimer. Interacts with ATG8 through a thioester bond between Cys-555 and the C-terminal Gly of ATG8 and with ATG12 through a thioester bond between Cys-555 and the C-terminal Gly of ATG12. Also interacts with ATG3.

It is found in the cytoplasm. The protein localises to the preautophagosomal structure. E1-like activating enzyme involved in the 2 ubiquitin-like systems required for cytoplasm to vacuole transport (Cvt) and autophagy. Activates ATG12 for its conjugation with ATG5 and ATG8 for its conjugation with phosphatidylethanolamine. Both systems are needed for the ATG8 association to Cvt vesicles and autophagosomes membranes. Autophagy is essential for maintenance of amino acid levels and protein synthesis under nitrogen starvation. Required for selective autophagic degradation of the nucleus (nucleophagy) as well as for mitophagy which contributes to regulate mitochondrial quantity and quality by eliminating the mitochondria to a basal level to fulfill cellular energy requirements and preventing excess ROS production. Required for normal mycelial growth and conidiogenesis, and regulates sclerotial formation. Plays an essential role in pathogenesis. This Botryotinia fuckeliana (strain T4) (Noble rot fungus) protein is Ubiquitin-like modifier-activating enzyme atg7.